The sequence spans 671 residues: DNA ligase (671 aa).

NAD(+) contacts are provided by residues 32–36 (DAEYD), 81–82 (SL), and Glu113. Residue Lys115 is the N6-AMP-lysine intermediate of the active site. NAD(+)-binding residues include Arg136, Glu173, Lys290, and Lys314. 4 residues coordinate Zn(2+): Cys408, Cys411, Cys426, and Cys432. Positions 593–671 (EIDSPFAGKT…ETEMLRLLGS (79 aa)) constitute a BRCT domain.

It belongs to the NAD-dependent DNA ligase family. LigA subfamily. Mg(2+) serves as cofactor. It depends on Mn(2+) as a cofactor.

The catalysed reaction is NAD(+) + (deoxyribonucleotide)n-3'-hydroxyl + 5'-phospho-(deoxyribonucleotide)m = (deoxyribonucleotide)n+m + AMP + beta-nicotinamide D-nucleotide.. Functionally, DNA ligase that catalyzes the formation of phosphodiester linkages between 5'-phosphoryl and 3'-hydroxyl groups in double-stranded DNA using NAD as a coenzyme and as the energy source for the reaction. It is essential for DNA replication and repair of damaged DNA. The protein is DNA ligase of Escherichia coli O1:K1 / APEC.